The chain runs to 161 residues: Long arms of the bivalent protein 1 (161 aa).

Residues 72–75 (KVIW) carry the PP1 binding motif motif. The segment at 85-161 (GTMFEDFKED…SDKTMCSGQS (77 aa)) is disordered. Positions 97-115 (QESVSSISNNEANWGSSVN) are enriched in polar residues. Positions 120–129 (NYEKMQKEET) are enriched in basic and acidic residues. The segment covering 130–151 (FDPYDSDSDTSEDSDFDEDFED) has biased composition (acidic residues).

In terms of assembly, interacts with gsp-1 and gsp-2; the interaction is direct.

The protein resides in the chromosome. The protein localises to the nucleus. Functionally, involved in sister chromatid cohesion during mitosis and meiosis. In association with the gsp-2 phosphatase, it both restricts the localization and antagonizes the function of the air-2 kinase during meiosis I and mitosis to promote chromatid cohesion and spindle attachment. This in turn, drives germ cell immortality. Furthermore, may play a role in ensuring the timely assembly of the synaptonemal complex during prophase I of meiosis. The protein is Long arms of the bivalent protein 1 of Caenorhabditis elegans.